A 35-amino-acid polypeptide reads, in one-letter code: Defensin-B (35 aa).

3 disulfide bridges follow: C4–C25, C10–C33, and C14–C35.

It localises to the secreted. Has antibacterial activity against M.luteus and E.coli. The polypeptide is Defensin-B (Mytilus edulis (Blue mussel)).